A 417-amino-acid chain; its full sequence is Serine hydroxymethyltransferase (417 aa).

(6S)-5,6,7,8-tetrahydrofolate contacts are provided by residues Leu121 and 125-127 (GHL). At Lys229 the chain carries N6-(pyridoxal phosphate)lysine. 355–357 (SPF) is a (6S)-5,6,7,8-tetrahydrofolate binding site.

It belongs to the SHMT family. In terms of assembly, homodimer. It depends on pyridoxal 5'-phosphate as a cofactor.

It is found in the cytoplasm. The enzyme catalyses (6R)-5,10-methylene-5,6,7,8-tetrahydrofolate + glycine + H2O = (6S)-5,6,7,8-tetrahydrofolate + L-serine. The protein operates within one-carbon metabolism; tetrahydrofolate interconversion. It participates in amino-acid biosynthesis; glycine biosynthesis; glycine from L-serine: step 1/1. Its function is as follows. Catalyzes the reversible interconversion of serine and glycine with tetrahydrofolate (THF) serving as the one-carbon carrier. This reaction serves as the major source of one-carbon groups required for the biosynthesis of purines, thymidylate, methionine, and other important biomolecules. Also exhibits THF-independent aldolase activity toward beta-hydroxyamino acids, producing glycine and aldehydes, via a retro-aldol mechanism. The protein is Serine hydroxymethyltransferase of Klebsiella pneumoniae subsp. pneumoniae (strain ATCC 700721 / MGH 78578).